A 2571-amino-acid polypeptide reads, in one-letter code: Highly reducing polyketide synthase 19 (2571 aa).

Residues 1-51 form a disordered region; sequence MSPIFLGDSEDAATCRCGPPSSPSPELSGTETALTSDSDGPELLNPGPQGP. Positions 27 to 38 are enriched in polar residues; it reads LSGTETALTSDS. Residues 51 to 485 enclose the Ketosynthase family 3 (KS3) domain; sequence PEPIAIIGMG…GANAHCILES (435 aa). Residues C224, H359, and H398 each act as for beta-ketoacyl synthase activity in the active site. The tract at residues 609–932 is malonyl-CoA:ACP transacylase (MAT) domain; the sequence is VFTGQGAQWA…PYNSALLRGK (324 aa). S701 serves as the catalytic For malonyltransferase activity. The N-terminal hotdog fold stretch occupies residues 1019-1163; it reads HDLLGSRVPG…GLVKLTQNED (145 aa). The tract at residues 1019 to 1340 is dehydratase (DH) domain; it reads HDLLGSRVPG…SGCRMVPYSS (322 aa). The PKS/mFAS DH domain occupies 1019–1344; sequence HDLLGSRVPG…MVPYSSGTAV (326 aa). The Proton acceptor; for dehydratase activity role is filled by H1051. The C-terminal hotdog fold stretch occupies residues 1177-1344; it reads MEQSAPRTWY…MVPYSSGTAV (168 aa). The active-site Proton donor; for dehydratase activity is the D1241. Positions 1800–2140 are enoyl reductase (ER) domain; that stretch reads NMSDAFVFTR…AFRALSGSTT (341 aa). Residues 2177 to 2355 are ketoreductase (KR) domain; the sequence is SYLLVGCLGG…ATSVGLGMIS (179 aa). One can recognise a Carrier domain in the interval 2490–2568; it reads AVAAQALELV…MLSELIAGKL (79 aa). S2527 is subject to O-(pantetheine 4'-phosphoryl)serine.

It participates in polyketide biosynthesis. Highly reducing polyketide synthase; part of the gene cluster that mediates the biosynthesis of pyriculol and pyriculariol, two heptaketides that induce lesion formation upon application on rice leaves but are dispensable for pathogenicity. The highly reducing polyketide synthase synthesizes the heptaketide backbone of pyriculol and pyriculariol. Pyriculol and pyriculariol contain several hydroxyl moieties and double bonds, so it can be assumed that several reduction steps occur during biosynthesis. These reactions could be executed by PKS19 itself or partly by the tailoring enzymes OXR1, PXR2, RED1, RED2 or RED3, identified within the cluster. The FAD-linked oxidoreductase OXR1 is the only tailoring enzyme for which the function has been determined yet, and is involved in the oxidation of dihydropyriculol and dihydropyriculariol into pyriculol and pyriculariol, respectively. The chain is Highly reducing polyketide synthase 19 from Pyricularia oryzae (strain 70-15 / ATCC MYA-4617 / FGSC 8958) (Rice blast fungus).